Here is a 355-residue protein sequence, read N- to C-terminus: D-alanine--D-alanine ligase (355 aa).

Residues 143-350 (KTIFSNLKIP…IEQLVAKLVD (208 aa)) form the ATP-grasp domain. 178–233 (IKKLNFPVFVKPSNSGSSLGISKVINKSALLKALEKAWEIDARILVEEGLETREIE) contributes to the ATP binding site. Residues Asp303, Glu317, and Asn319 each coordinate Mg(2+).

This sequence belongs to the D-alanine--D-alanine ligase family. Mg(2+) serves as cofactor. It depends on Mn(2+) as a cofactor.

The protein localises to the cytoplasm. It carries out the reaction 2 D-alanine + ATP = D-alanyl-D-alanine + ADP + phosphate + H(+). Its pathway is cell wall biogenesis; peptidoglycan biosynthesis. In terms of biological role, cell wall formation. The sequence is that of D-alanine--D-alanine ligase from Prochlorococcus marinus (strain MIT 9312).